The primary structure comprises 432 residues: Phosphoribosylamine--glycine ligase (432 aa).

The ATP-grasp domain maps to 110–316; it reads RNFMKDNDIE…MIDVMSAVVN (207 aa). Position 137-194 (137-194) interacts with ATP; that stretch reads IEELGSVAIKPAGLTGGKGVKVMGDQLPDTGAAYDYAVSLLDGDNVVVEENLVGEEFT. The Mg(2+) site is built by Gln-274, Glu-286, and Asn-288. The Mn(2+) site is built by Gln-274, Glu-286, and Asn-288.

This sequence belongs to the GARS family. Mg(2+) serves as cofactor. It depends on Mn(2+) as a cofactor.

The enzyme catalyses 5-phospho-beta-D-ribosylamine + glycine + ATP = N(1)-(5-phospho-beta-D-ribosyl)glycinamide + ADP + phosphate + H(+). Its pathway is purine metabolism; IMP biosynthesis via de novo pathway; N(1)-(5-phospho-D-ribosyl)glycinamide from 5-phospho-alpha-D-ribose 1-diphosphate: step 2/2. This Methanococcoides burtonii (strain DSM 6242 / NBRC 107633 / OCM 468 / ACE-M) protein is Phosphoribosylamine--glycine ligase.